The following is a 174-amino-acid chain: Large ribosomal subunit protein uL6 (174 aa).

This sequence belongs to the universal ribosomal protein uL6 family. As to quaternary structure, part of the 50S ribosomal subunit.

In terms of biological role, this protein binds to the 23S rRNA, and is important in its secondary structure. It is located near the subunit interface in the base of the L7/L12 stalk, and near the tRNA binding site of the peptidyltransferase center. The sequence is that of Large ribosomal subunit protein uL6 from Stenotrophomonas maltophilia (strain R551-3).